Consider the following 265-residue polypeptide: O-methyltransferase NEC2 (265 aa).

Belongs to the methyltransferase superfamily.

The catalysed reaction is desmethylnectriapyrone + S-adenosyl-L-methionine = nectriapyrone + S-adenosyl-L-homocysteine + H(+). Functionally, O-methyltransferase; part of the gene cluster that mediates the biosynthesis of nectriapyrone and its analogs phomopyrone A, acropyrone and zaepyrone. The nectriapyrone biosynthetic gene cluster consists of two genes, the highly reducing polyketide synthase NEC1 that produces a demethylated analog of nectriapyrone from one unit of acetyl-CoA and one unit of malonyl-CoA; and the O-methyltransferase NEC2 that further methylates the NEC1 product to yield nectriapyrone. Nectriapyrone is further hydrolyzed to nectriapyrone D, also known as gulypyrone B, by an unidentified hydrolase localized outside the nectriapyrone cluster. In Pyricularia oryzae (strain 70-15 / ATCC MYA-4617 / FGSC 8958) (Rice blast fungus), this protein is O-methyltransferase NEC2.